The chain runs to 292 residues: uncharacterized protein (292 aa).

10 helical membrane passes run 6–26 (LGII…KVGI), 32–52 (LLFS…ILFI), 68–88 (IIMS…GMQF), 94–114 (TSVL…FSLN), 123–143 (MGLV…MLNI), 147–167 (ALFG…ANVF), 182–202 (AWHL…FEAV), 214–234 (SLLF…FWVL), 242–262 (ASMA…LQLH), and 265–285 (ITIN…MNTF). EamA domains follow at residues 13–137 (LIWG…FIFG) and 159–285 (LSWG…MNTF).

This sequence belongs to the EamA transporter family.

The protein localises to the cell membrane. This is an uncharacterized protein from Bacillus subtilis (strain 168).